We begin with the raw amino-acid sequence, 872 residues long: Alanine--tRNA ligase (872 aa).

Positions 567, 571, 669, and 673 each coordinate Zn(2+).

The protein belongs to the class-II aminoacyl-tRNA synthetase family. Zn(2+) is required as a cofactor.

It is found in the cytoplasm. It carries out the reaction tRNA(Ala) + L-alanine + ATP = L-alanyl-tRNA(Ala) + AMP + diphosphate. Functionally, catalyzes the attachment of alanine to tRNA(Ala) in a two-step reaction: alanine is first activated by ATP to form Ala-AMP and then transferred to the acceptor end of tRNA(Ala). Also edits incorrectly charged Ser-tRNA(Ala) and Gly-tRNA(Ala) via its editing domain. This Streptococcus pyogenes serotype M28 (strain MGAS6180) protein is Alanine--tRNA ligase.